Here is a 399-residue protein sequence, read N- to C-terminus: MTKDLLALLKERGLFVQANFEKELKQLLNQGSFAFYVGFDPTAPSLHIGNYVLLHVAQIFQAMGHIPHVLLGSGTALIGDPTGRMELRQMMSRETIAENTRNIKKQIRRFLGSNVVFCQNETWLKKLNYIEVIRELGPCFSVNKMLATDAFSARWERGLTLMELNYMVLQAYDFYYLNQKYGVQLQIGGSDQWANILAGADLIRRKTQKQVYGMTTNLLVKANGEKMGKSASGALWLDPQKTSPYDFYQYWINLDDASLQKVFLMLTKLDTKAIETLCNLKGAAIKEAKAKLAFELTDAIHGTKAALVAQAKSARIFAFQPDTETKTVRAGTRLVDVIVDLGLVVSRSEARRVIQQGGLTINQEKVTDVEMVLQASSQPLVIGKGKKRFVTVQVIANTK.

Tyrosine 36 lines the L-tyrosine pocket. The 'HIGH' region motif lies at 41–50 (PTAPSLHIGN). Positions 166 and 170 each coordinate L-tyrosine. The 'KMSKS' region motif lies at 226–230 (KMGKS). Lysine 229 provides a ligand contact to ATP. In terms of domain architecture, S4 RNA-binding spans 332-395 (TRLVDVIVDL…KKRFVTVQVI (64 aa)).

Belongs to the class-I aminoacyl-tRNA synthetase family. TyrS type 1 subfamily. Homodimer.

It is found in the cytoplasm. The catalysed reaction is tRNA(Tyr) + L-tyrosine + ATP = L-tyrosyl-tRNA(Tyr) + AMP + diphosphate + H(+). Catalyzes the attachment of tyrosine to tRNA(Tyr) in a two-step reaction: tyrosine is first activated by ATP to form Tyr-AMP and then transferred to the acceptor end of tRNA(Tyr). This Mycoplasma pneumoniae (strain ATCC 29342 / M129 / Subtype 1) (Mycoplasmoides pneumoniae) protein is Tyrosine--tRNA ligase.